The primary structure comprises 251 residues: S-acyl fatty acid synthase thioesterase, medium chain (251 aa).

Residues serine 90 and histidine 226 contribute to the active site.

Belongs to the thioesterase family.

It carries out the reaction (9Z)-octadecenoyl-[ACP] + H2O = (9Z)-octadecenoate + holo-[ACP] + H(+). Its function is as follows. In fatty acid biosynthesis chain termination and release of the free fatty acid product is achieved by hydrolysis of the thio ester by a thioesterase I, a component of the fatty acid synthetase complex. The chain length of the released fatty acid is usually C16. However, in the mammary glands of non-ruminant mammals, and in the uropygial gland of certain waterfowl there exists a second thioesterase which releases medium-chain length fatty acids (C8 to C2). This Anas platyrhynchos (Mallard) protein is S-acyl fatty acid synthase thioesterase, medium chain.